A 189-amino-acid polypeptide reads, in one-letter code: Chitin synthase 1 (189 aa).

It belongs to the chitin synthase family. Class I subfamily.

The protein localises to the cell membrane. It catalyses the reaction [(1-&gt;4)-N-acetyl-beta-D-glucosaminyl](n) + UDP-N-acetyl-alpha-D-glucosamine = [(1-&gt;4)-N-acetyl-beta-D-glucosaminyl](n+1) + UDP + H(+). Its function is as follows. Polymerizes chitin, a structural polymer of the cell wall and septum, by transferring the sugar moiety of UDP-GlcNAc to the non-reducing end of the growing chitin polymer. The protein is Chitin synthase 1 (chs1) of Aspergillus niger.